A 555-amino-acid polypeptide reads, in one-letter code: Cytochrome P450 monooxygenase abl2 (555 aa).

The next 2 membrane-spanning stretches (helical) occupy residues 38–58 and 141–161; these read SFDL…ALFI and VFIG…APLA. Residues asparagine 325 and asparagine 360 are each glycosylated (N-linked (GlcNAc...) asparagine). A heme-binding site is contributed by cysteine 489.

The protein belongs to the cytochrome P450 family. It depends on heme as a cofactor.

It localises to the membrane. Its pathway is hormone biosynthesis. Its function is as follows. Cytochrome P450 monooxygenase; part of the gene cluster that mediates the biosynthesis of abscisic acid (ABA), a phytohormone that acts antagonistically toward salicylic acid (SA), jasmonic acid (JA) and ethylene (ETH) signaling, to impede plant defense responses. The first step of the pathway catalyzes the reaction from farnesyl diphosphate to alpha-ionylideneethane performed by the alpha-ionylideneethane synthase abl3 via a three-step reaction mechanism involving 2 neutral intermediates, beta-farnesene and allofarnesene. The cytochrome P450 monooxygenase abl1 might then be involved in the conversion of alpha-ionylideneethane to alpha-ionylideneacetic acid. Alpha-ionylideneacetic acid is further converted to abscisic acid in 2 steps involving the cytochrome P450 monooxygenase abl2 and the short-chain dehydrogenase/reductase abl4, via the intermediates 1'-deoxy-ABA or 1',4'-trans-diol-ABA, depending on the order of action of these 2 enzymes. Abl2 is responsible for the hydroxylation of carbon atom C-1' and abl4 might be involved in the oxidation of the C-4' carbon atom. The polypeptide is Cytochrome P450 monooxygenase abl2 (Leptosphaeria maculans (strain JN3 / isolate v23.1.3 / race Av1-4-5-6-7-8) (Blackleg fungus)).